Consider the following 90-residue polypeptide: Hemoglobin subunit alpha-1 (90 aa).

Positions 1 to 90 constitute a Globin domain; it reads VLTDDDKNHV…SKLSDLHAEK (90 aa).

It belongs to the globin family. Heterotetramer of two alpha chains and two beta chains. In terms of tissue distribution, red blood cells.

Functionally, involved in oxygen transport from the lung to the various peripheral tissues. This chain is Hemoglobin subunit alpha-1, found in Saara hardwickii (Indian spiny-tailed lizard).